We begin with the raw amino-acid sequence, 447 residues long: ATP-dependent protease ATPase subunit HslU (447 aa).

ATP is bound by residues Ile-18, Gly-60–Glu-65, Asp-259, Glu-325, and Arg-397.

Belongs to the ClpX chaperone family. HslU subfamily. In terms of assembly, a double ring-shaped homohexamer of HslV is capped on each side by a ring-shaped HslU homohexamer. The assembly of the HslU/HslV complex is dependent on binding of ATP.

It localises to the cytoplasm. Its function is as follows. ATPase subunit of a proteasome-like degradation complex; this subunit has chaperone activity. The binding of ATP and its subsequent hydrolysis by HslU are essential for unfolding of protein substrates subsequently hydrolyzed by HslV. HslU recognizes the N-terminal part of its protein substrates and unfolds these before they are guided to HslV for hydrolysis. In Burkholderia pseudomallei (strain K96243), this protein is ATP-dependent protease ATPase subunit HslU.